A 249-amino-acid polypeptide reads, in one-letter code: Putative protein SNX29P2 (249 aa).

Disordered stretches follow at residues 109–171 (QVTN…SNSW) and 188–249 (DVKS…PGFK). Residues 156–170 (SPFGPNSNGSQSSNS) are compositionally biased toward low complexity. Acidic residues predominate over residues 193–204 (DDEDVDENEDDV). The segment covering 226–242 (HSVTQAGVQWHDLSSLQ) has biased composition (polar residues).

This sequence belongs to the sorting nexin family.

The chain is Putative protein SNX29P2 (SNX29P2) from Homo sapiens (Human).